Here is a 508-residue protein sequence, read N- to C-terminus: Photosystem II CP47 reaction center protein (508 aa).

6 helical membrane passes run 21–36 (SVHIMHTALVAGWAGS), 101–115 (IVFSGLCFLAAIWHW), 140–156 (GIHLFLSGVACFGFGAF), 203–218 (IAAGTLGILAGLFHLS), 237–252 (VLSSSIAAVFFAAFVV), and 457–472 (SFALLFFFGHIWHGAR).

Belongs to the PsbB/PsbC family. PsbB subfamily. In terms of assembly, PSII is composed of 1 copy each of membrane proteins PsbA, PsbB, PsbC, PsbD, PsbE, PsbF, PsbH, PsbI, PsbJ, PsbK, PsbL, PsbM, PsbT, PsbX, PsbY, PsbZ, Psb30/Ycf12, at least 3 peripheral proteins of the oxygen-evolving complex and a large number of cofactors. It forms dimeric complexes. It depends on Binds multiple chlorophylls. PSII binds additional chlorophylls, carotenoids and specific lipids. as a cofactor.

The protein localises to the plastid. It localises to the chloroplast thylakoid membrane. In terms of biological role, one of the components of the core complex of photosystem II (PSII). It binds chlorophyll and helps catalyze the primary light-induced photochemical processes of PSII. PSII is a light-driven water:plastoquinone oxidoreductase, using light energy to abstract electrons from H(2)O, generating O(2) and a proton gradient subsequently used for ATP formation. The polypeptide is Photosystem II CP47 reaction center protein (Manihot esculenta (Cassava)).